A 132-amino-acid polypeptide reads, in one-letter code: uncharacterized protein (132 aa).

Residues 107–132 (LNTFSGSGQKHSQPGSGQHPFSFRKD) form a disordered region. Positions 108–122 (NTFSGSGQKHSQPGS) are enriched in polar residues.

This is an uncharacterized protein from Bacillus subtilis (strain 168).